Reading from the N-terminus, the 658-residue chain is ATP-dependent RNA helicase DDX3Y (658 aa).

The disordered stretch occupies residues Met1 to Glu143. Ser2 is subject to N-acetylserine. Positions Arg45–Ala69 are enriched in basic and acidic residues. Lys56 bears the N6-acetyllysine mark. Phosphoserine is present on residues Ser86 and Ser90. Over residues Gly94–Arg129 the composition is skewed to basic and acidic residues. Position 101 is an omega-N-methylarginine (Arg101). Position 104 is a phosphotyrosine (Tyr104). Arg110 bears the Omega-N-methylarginine mark. N6-acetyllysine is present on Lys117. Ser130 and Ser182 each carry phosphoserine. A Q motif motif is present at residues Glu179–Lys207. Tyr199–Gln206 is an ATP binding site. Residues Ile210 to Leu402 enclose the Helicase ATP-binding domain. Lys214 participates in a covalent cross-link: Glycyl lysine isopeptide (Lys-Gly) (interchain with G-Cter in SUMO2). Residue Ala223 to Thr230 coordinates ATP. Positions Asp346 to Asp349 match the DEAD box motif. The region spanning Asn413–Ala574 is the Helicase C-terminal domain. Position 455 is a phosphoserine (Ser455). Position 590 is an omega-N-methylarginine (Arg590). Phosphoserine is present on residues Ser592 and Ser603. Residues Ala597–Asn627 are disordered. Low complexity predominate over residues Ser603 to Asn627. Residues Arg615 and Arg628 each carry the omega-N-methylarginine modification.

The protein belongs to the DEAD box helicase family. DDX3/DED1 subfamily. Found in heart, brain, liver, skeletal muscle, kidney and testis. Low expression detected in lung. In testis, expressed in all types of spermatogenic cells including spermatogonia, spermatocytes, spermatids and somatic Sertoli cells within the seminiferous tubules. Also expressed in Leydig cells and other interstitial cells.

The protein localises to the cytoplasm. The protein resides in the nucleus. The enzyme catalyses ATP + H2O = ADP + phosphate + H(+). Probable ATP-dependent RNA helicase. During immune response, may enhance IFNB1 expression via IRF3/IRF7 pathway. In Mus musculus (Mouse), this protein is ATP-dependent RNA helicase DDX3Y (Ddx3y).